Reading from the N-terminus, the 199-residue chain is Recombination protein RecR (199 aa).

The C4-type zinc-finger motif lies at 57-72 (CSICGNITESDPCMIC). The Toprim domain maps to 80–176 (SKVVVVEQPK…KVTRLAHGLA (97 aa)).

It belongs to the RecR family.

Its function is as follows. May play a role in DNA repair. It seems to be involved in an RecBC-independent recombinational process of DNA repair. It may act with RecF and RecO. The sequence is that of Recombination protein RecR from Ligilactobacillus salivarius (strain UCC118) (Lactobacillus salivarius).